The primary structure comprises 807 residues: Ribosome-releasing factor 2, mitochondrial (807 aa).

The N-terminal 18 residues, 1-18 (MFCRKYVFQTWKQLSRSY), are a transit peptide targeting the mitochondrion. The tr-type G domain occupies 27-315 (AKTRNIGIIA…GITKYLPSPL (289 aa)). GTP is bound by residues 36 to 43 (AHIDAGKT), 100 to 104 (DTPGH), and 154 to 157 (NKMD).

Belongs to the TRAFAC class translation factor GTPase superfamily. Classic translation factor GTPase family. EF-G/EF-2 subfamily.

Its subcellular location is the mitochondrion. Mitochondrial GTPase that mediates the disassembly of ribosomes from messenger RNA at the termination of mitochondrial protein biosynthesis. Not involved in the GTP-dependent ribosomal translocation step during translation elongation. This is Ribosome-releasing factor 2, mitochondrial from Candida albicans (strain SC5314 / ATCC MYA-2876) (Yeast).